An 818-amino-acid chain; its full sequence is Patatin-like phospholipase domain-containing protein YALI0D16379g (818 aa).

Disordered stretches follow at residues Met1–Asn50 and Glu154–Glu178. Over residues Ser22–Arg38 the composition is skewed to polar residues. Over residues Lys164–Glu178 the composition is skewed to basic and acidic residues. The chain crosses the membrane as a helical span at residues Trp223 to Val243. One can recognise a PNPLA domain in the interval Leu398 to Asn589. The GXSXG motif lies at Gly429–Gly433. Catalysis depends on Ser431, which acts as the Nucleophile. The Proton acceptor role is filled by Asp576. Residues Ala781–Ser805 are disordered.

This sequence belongs to the PLPL family.

The protein resides in the membrane. Its function is as follows. Probable lipid hydrolase. The sequence is that of Patatin-like phospholipase domain-containing protein YALI0D16379g from Yarrowia lipolytica (strain CLIB 122 / E 150) (Yeast).